The chain runs to 251 residues: GTP cyclohydrolase 1 type 2 homolog (251 aa).

A divalent metal cation is bound by residues H64, H65, D102, H219, and E223.

This sequence belongs to the GTP cyclohydrolase I type 2/NIF3 family. Homohexamer.

The protein is GTP cyclohydrolase 1 type 2 homolog of Chlamydia pneumoniae (Chlamydophila pneumoniae).